The chain runs to 153 residues: 6,7-dimethyl-8-ribityllumazine synthase (153 aa).

5-amino-6-(D-ribitylamino)uracil is bound by residues F21, 55–57 (AFE), and 79–81 (TVI). 84 to 85 (AT) contributes to the (2S)-2-hydroxy-3-oxobutyl phosphate binding site. H87 functions as the Proton donor in the catalytic mechanism. Residue F112 coordinates 5-amino-6-(D-ribitylamino)uracil. Position 126 (R126) interacts with (2S)-2-hydroxy-3-oxobutyl phosphate.

The protein belongs to the DMRL synthase family. As to quaternary structure, forms an icosahedral capsid composed of 60 subunits, arranged as a dodecamer of pentamers.

It carries out the reaction (2S)-2-hydroxy-3-oxobutyl phosphate + 5-amino-6-(D-ribitylamino)uracil = 6,7-dimethyl-8-(1-D-ribityl)lumazine + phosphate + 2 H2O + H(+). It functions in the pathway cofactor biosynthesis; riboflavin biosynthesis; riboflavin from 2-hydroxy-3-oxobutyl phosphate and 5-amino-6-(D-ribitylamino)uracil: step 1/2. Functionally, catalyzes the formation of 6,7-dimethyl-8-ribityllumazine by condensation of 5-amino-6-(D-ribitylamino)uracil with 3,4-dihydroxy-2-butanone 4-phosphate. This is the penultimate step in the biosynthesis of riboflavin. In Bacillus cereus (strain AH187), this protein is 6,7-dimethyl-8-ribityllumazine synthase.